The following is a 251-amino-acid chain: MLTPERHQLIIDQIEKHDVVKIQELINLTNASESTIRRDLSTLEERGFLKRVHGGAAKLSDIRLEPDMLEKSSKNLHDKLKIAEKAASLLEEGDCIYLDAGTTTLHMIDFMDKTKDIVVVTNGVMHIDALIRKEISFYLLGGYVKHRTGAIIGGASLVAMDQYRFDKSFLGTNGVHTEAGFTTPDPDEALLKQKAIKQAKHAYVLADPSKFGEISFSAFAGIGDATIITTDAEELTFDNYQEKTVVKVVKP.

The HTH deoR-type domain occupies 3-58; sequence TPERHQLIIDQIEKHDVVKIQELINLTNASESTIRRDLSTLEERGFLKRVHGGAAK. A DNA-binding region (H-T-H motif) is located at residues 20–39; that stretch reads VKIQELINLTNASESTIRRD.

This is an uncharacterized protein from Bacillus subtilis (strain 168).